The chain runs to 141 residues: Arsenate reductase (141 aa).

C12 (nucleophile; cysteine thioarsenate intermediate) is an active-site residue.

This sequence belongs to the ArsC family. In terms of assembly, monomer in solution.

It catalyses the reaction [glutaredoxin]-dithiol + arsenate + glutathione + H(+) = glutathionyl-S-S-[glutaredoxin] + arsenite + H2O. Its activity is regulated as follows. Inhibited by the thiol reagents iodoacetate (IAA) and N-ethylmaleimide (NEM). Activity is rapidly inactivated by the histidine-modifying reagent diethylpyrocarbonate (DEPC). In terms of biological role, involved in resistance to arsenate. Catalyzes the reduction of arsenate [As(V)] to arsenite [As(III)]. The resulting arsenite is then extruded from the cell via the ArsAB transport system. This Escherichia coli protein is Arsenate reductase.